The primary structure comprises 270 residues: Oxidoreductase NAD-binding domain-containing protein 1 (270 aa).

The FAD-binding FR-type domain maps to 20 to 123 (MELFSARVCD…VGGNFYFDPQ (104 aa)). 137–142 (GVGINP) is an NAD(+) binding site.

This is Oxidoreductase NAD-binding domain-containing protein 1 (oxnad1) from Danio rerio (Zebrafish).